A 207-amino-acid chain; its full sequence is Varv peptide A/Kalata-B1 (207 aa).

An N-terminal signal peptide occupies residues 1-20 (MKMFIVLVLSAAFALPAAFA). The propeptide occupies 21-66 (TEQDVITLQAYEELLKNGAANGMTKTVISSPVLEEALVSYSKNKLG). Positions 67–95 (GLPVCGETCVGGTCNTPGCSCSWPVCTRN) form a cross-link, cyclopeptide (Gly-Asn). 3 cysteine pairs are disulfide-bonded: Cys-71-Cys-85, Cys-75-Cys-87, and Cys-80-Cys-92. Positions 96–120 (SLESTKSANPLLEEALTAFAKKGLG) are excised as a propeptide. The segment at residues 121–149 (GLPVCGETCVGGTCNTPGCTCSWPVCTRN) is a cross-link (cyclopeptide (Gly-Asn)). Intrachain disulfides connect Cys-125/Cys-139, Cys-129/Cys-141, and Cys-134/Cys-146. Residues 150–174 (ALETQKPNHLLEEALVAFAKKGNLG) constitute a propeptide that is removed on maturation. Positions 175 to 203 (GLPVCGETCVGGTCNTPGCSCSWPVCTRN) form a cross-link, cyclopeptide (Gly-Asn). 3 cysteine pairs are disulfide-bonded: Cys-179–Cys-193, Cys-183–Cys-195, and Cys-188–Cys-200. Positions 204 to 207 (ALAM) are excised as a propeptide.

The protein belongs to the cyclotide family. Moebius subfamily. Varv peptide A and kalata-B1 are cyclic peptides.

Functionally, probably participates in a plant defense mechanism. Has hemolytic activity. The chain is Varv peptide A/Kalata-B1 from Viola odorata (Sweet violet).